Here is a 41-residue protein sequence, read N- to C-terminus: Photosystem II reaction center protein L (41 aa).

The chain crosses the membrane as a helical span at residues 20-40 (SLYLGLLLVFVVGLLFSSYFL).

The protein belongs to the PsbL family. PSII is composed of 1 copy each of membrane proteins PsbA, PsbB, PsbC, PsbD, PsbE, PsbF, PsbH, PsbI, PsbJ, PsbK, PsbL, PsbM, PsbT, PsbX, PsbY, PsbZ, Psb30/Ycf12, peripheral proteins PsbO, CyanoQ (PsbQ), PsbU, PsbV and a large number of cofactors. It forms dimeric complexes.

The protein localises to the cellular thylakoid membrane. In terms of biological role, one of the components of the core complex of photosystem II (PSII). PSII is a light-driven water:plastoquinone oxidoreductase that uses light energy to abstract electrons from H(2)O, generating O(2) and a proton gradient subsequently used for ATP formation. It consists of a core antenna complex that captures photons, and an electron transfer chain that converts photonic excitation into a charge separation. This subunit is found at the monomer-monomer interface and is required for correct PSII assembly and/or dimerization. The chain is Photosystem II reaction center protein L from Synechococcus sp. (strain JA-2-3B'a(2-13)) (Cyanobacteria bacterium Yellowstone B-Prime).